Consider the following 480-residue polypeptide: Pyruvate kinase (480 aa).

Arginine 36 contacts substrate. Residues asparagine 38, serine 40, and aspartate 70 each contribute to the K(+) site. 38 to 41 provides a ligand contact to ATP; sequence NFSH. The ATP site is built by arginine 77 and lysine 160. Glutamate 225 contacts Mg(2+). Positions 251, 252, and 284 each coordinate substrate. Residue aspartate 252 coordinates Mg(2+).

This sequence belongs to the pyruvate kinase family. In terms of assembly, homotetramer. The cofactor is Mg(2+). K(+) serves as cofactor.

It carries out the reaction pyruvate + ATP = phosphoenolpyruvate + ADP + H(+). Its pathway is carbohydrate degradation; glycolysis; pyruvate from D-glyceraldehyde 3-phosphate: step 5/5. With respect to regulation, allosterically activated by AMP and by several sugar phosphates. Belongs to type II PK. The polypeptide is Pyruvate kinase (pykA) (Buchnera aphidicola subsp. Acyrthosiphon pisum (strain APS) (Acyrthosiphon pisum symbiotic bacterium)).